We begin with the raw amino-acid sequence, 300 residues long: C-5 sterol desaturase (300 aa).

Transmembrane regions (helical) follow at residues 3 to 23, 68 to 88, 91 to 111, and 147 to 167; these read DPVL…WTAA, SLAL…QLSA, WYTW…YHRI, and ILMW…FCSW. One can recognise a Fatty acid hydroxylase domain in the interval 94 to 227; the sequence is WVIAIVGVDL…LIIWDRLFGS (134 aa).

Belongs to the sterol desaturase family.

Its subcellular location is the cell membrane. The protein is C-5 sterol desaturase (erg3) of Mycobacterium bovis (strain ATCC BAA-935 / AF2122/97).